The primary structure comprises 404 residues: Odorant receptor 74a (404 aa).

The Cytoplasmic segment spans residues 1-38; that stretch reads MSFHRYRPRLPGGELAPMPWPVSLYRVLNHVAWPLEAE. A helical transmembrane segment spans residues 39 to 59; sequence SGRWTVFLDRLMIFLGFLVFC. The Extracellular segment spans residues 60 to 67; sequence EHNEVDFH. The helical transmembrane segment at 68–88 threads the bilayer; sequence YLIANRQDMDNMLTGLPTYLI. Over 89–141 the chain is Cytoplasmic; it reads LVEMQIRCFQLAWHKDRFRALLQRFYAEIYVSEEMEPHLFASIQRQMLATRVN. The chain crosses the membrane as a helical span at residues 142-162; the sequence is STVYLLALLNFFLVPVTNVIY. The Extracellular portion of the chain corresponds to 163-181; the sequence is HRREMLYKQVYPFDNTQLH. Residues 182-202 traverse the membrane as a helical segment; that stretch reads FFIPLLVLNFWVGFIITSMLF. Residues 203–274 are Cytoplasmic-facing; it reads GELNVMGELM…QRVEKEFTLR (72 aa). Residues 275–295 traverse the membrane as a helical segment; that stretch reads IFVMFAFSAGLLCALFFKAFT. At 296–303 the chain is on the extracellular side; that stretch reads NPWGNVAY. The helical transmembrane segment at 304–324 threads the bilayer; that stretch reads IVWFLAKFMELLALGMLGSIL. Topologically, residues 325–380 are cytoplasmic; sequence LKTTDELGMMYYTADWEQVIHQSDNVGENVKLMKLVTLAIQLNSRPFFITGLNYFR. Residues 381-401 form a helical membrane-spanning segment; that stretch reads VSLTAVLKIIQGAFSYFTFLN. Over 402–404 the chain is Extracellular; the sequence is SMR.

The protein belongs to the insect chemoreceptor superfamily. Heteromeric odorant receptor channel (TC 1.A.69) family. Or1a subfamily. As to quaternary structure, interacts with Orco. Complexes exist early in the endomembrane system in olfactory sensory neurons (OSNs), coupling these complexes to the conserved ciliary trafficking pathway.

The protein localises to the cell membrane. Functionally, odorant receptor which mediates acceptance or avoidance behavior, depending on its substrates. The odorant receptor repertoire encodes a large collection of odor stimuli that vary widely in identity, intensity, and duration. May form a complex with Orco to form odorant-sensing units, providing sensitive and prolonged odorant signaling and calcium permeability. Involved in the behavioral responses to octanol, anisole, and 2-heptanone. The chain is Odorant receptor 74a (Or74a) from Drosophila melanogaster (Fruit fly).